A 352-amino-acid polypeptide reads, in one-letter code: Histidinol-phosphate aminotransferase (352 aa).

Lysine 210 bears the N6-(pyridoxal phosphate)lysine mark.

It belongs to the class-II pyridoxal-phosphate-dependent aminotransferase family. Histidinol-phosphate aminotransferase subfamily. In terms of assembly, homodimer. It depends on pyridoxal 5'-phosphate as a cofactor.

The enzyme catalyses L-histidinol phosphate + 2-oxoglutarate = 3-(imidazol-4-yl)-2-oxopropyl phosphate + L-glutamate. The protein operates within amino-acid biosynthesis; L-histidine biosynthesis; L-histidine from 5-phospho-alpha-D-ribose 1-diphosphate: step 7/9. This Clostridium acetobutylicum (strain ATCC 824 / DSM 792 / JCM 1419 / IAM 19013 / LMG 5710 / NBRC 13948 / NRRL B-527 / VKM B-1787 / 2291 / W) protein is Histidinol-phosphate aminotransferase.